Here is a 283-residue protein sequence, read N- to C-terminus: Pantothenate synthetase (283 aa).

30-37 (MGNLHLGH) lines the ATP pocket. Catalysis depends on histidine 37, which acts as the Proton donor. Glutamine 61 is a binding site for (R)-pantoate. Position 61 (glutamine 61) interacts with beta-alanine. 149–152 (GQKD) serves as a coordination point for ATP. Glutamine 155 provides a ligand contact to (R)-pantoate. ATP-binding positions include isoleucine 178 and 186 to 189 (MSSR).

The protein belongs to the pantothenate synthetase family. In terms of assembly, homodimer.

The protein resides in the cytoplasm. It carries out the reaction (R)-pantoate + beta-alanine + ATP = (R)-pantothenate + AMP + diphosphate + H(+). It participates in cofactor biosynthesis; (R)-pantothenate biosynthesis; (R)-pantothenate from (R)-pantoate and beta-alanine: step 1/1. Its function is as follows. Catalyzes the condensation of pantoate with beta-alanine in an ATP-dependent reaction via a pantoyl-adenylate intermediate. This is Pantothenate synthetase from Shewanella halifaxensis (strain HAW-EB4).